Here is a 269-residue protein sequence, read N- to C-terminus: Regulating synaptic membrane exocytosis protein 4 (269 aa).

One can recognise a C2 domain in the interval 115-233 (PMGDVEIGLQ…DLTTLAVGWY (119 aa)). Residues serine 254 and serine 257 each carry the phosphoserine modification.

As to quaternary structure, binds PPFIA3. Does not bind RAB3.

The protein localises to the synapse. Regulates synaptic membrane exocytosis. In Homo sapiens (Human), this protein is Regulating synaptic membrane exocytosis protein 4 (RIMS4).